The primary structure comprises 248 residues: Adenosylcobinamide-GDP ribazoletransferase (248 aa).

Transmembrane regions (helical) follow at residues 24 to 44 (EINL…IGAW), 70 to 90 (IIIT…GLFS), 106 to 126 (VGAN…ALFL), 134 to 154 (IGWL…LLFA), 168 to 188 (IFLG…LVAL), 189 to 209 (GAFF…FTII), and 228 to 248 (AGGQ…WGLI).

It belongs to the CobS family. Mg(2+) is required as a cofactor.

It is found in the cell membrane. It carries out the reaction alpha-ribazole + adenosylcob(III)inamide-GDP = adenosylcob(III)alamin + GMP + H(+). It catalyses the reaction alpha-ribazole 5'-phosphate + adenosylcob(III)inamide-GDP = adenosylcob(III)alamin 5'-phosphate + GMP + H(+). The protein operates within cofactor biosynthesis; adenosylcobalamin biosynthesis; adenosylcobalamin from cob(II)yrinate a,c-diamide: step 7/7. Its function is as follows. Joins adenosylcobinamide-GDP and alpha-ribazole to generate adenosylcobalamin (Ado-cobalamin). Also synthesizes adenosylcobalamin 5'-phosphate from adenosylcobinamide-GDP and alpha-ribazole 5'-phosphate. The chain is Adenosylcobinamide-GDP ribazoletransferase from Listeria monocytogenes serotype 4a (strain HCC23).